The sequence spans 1218 residues: ABC transporter NFT1 (1218 aa).

Residues 1–29 are Extracellular-facing; the sequence is MIKNGTCPYWERDDLSECARREYIEFKFP. Asn4 carries an N-linked (GlcNAc...) asparagine glycan. Residues 30 to 50 form a helical membrane-spanning segment; that stretch reads LFILLTGMIYAFCKVFRAFYL. Residues 51–103 lie on the Cytoplasmic side of the membrane; it reads RGKNHTNEAPEFEEQGNGNHEYARFSVLRLKSAWESRSFCNVNNRSTFDKFKK. Residues 104–124 form a helical membrane-spanning segment; that stretch reads FIEGAFIVLQLTIHLYILSSM. Residues 125–130 are Extracellular-facing; that stretch reads PMDNKK. Residues 131-151 traverse the membrane as a helical segment; it reads FFHQGFLVQMFLWILLLVVIT. Residues 152-169 lie on the Cytoplasmic side of the membrane; the sequence is LRLISASQSFRWVLACKR. Residues 170 to 190 form a helical membrane-spanning segment; the sequence is DLWAVSFYSYASLFTLSILPL. Residues 191 to 201 lie on the Extracellular side of the membrane; that stretch reads RSVFIGKIKDK. Residues 202-222 form a helical membrane-spanning segment; it reads IMVKYIISETFIDLALLLLLS. Topologically, residues 223–302 are cytoplasmic; it reads TSSIEGTRYS…SSKKGRLLPN (80 aa). Residues 303–323 traverse the membrane as a helical segment; sequence IICYFKAVFISQLFLAFVSSF. Residues 311–621 form the ABC transmembrane type-1 1 domain; sequence FISQLFLAFV…IASTVSLLIQ (311 aa). The Extracellular portion of the chain corresponds to 324-351; the sequence is LNFVPSLLMPRILSYVNDPKSKSWNLVS. The helical transmembrane segment at 352–374 threads the bilayer; it reads LYVSSMLVSKIIATTCRGQGLFL. Residues 375–449 lie on the Cytoplasmic side of the membrane; that stretch reads GEKGTMQLRT…VMSIDAFKVS (75 aa). Residues 410 to 434 are disordered; it reads NASTSFEENPDSSEAEPRKKSSRKD. The segment covering 424–434 has biased composition (basic and acidic residues); it reads AEPRKKSSRKD. The helical transmembrane segment at 450-470 threads the bilayer; sequence EAMNTFYLACEAVFMTVTALM. Residues 471–481 lie on the Extracellular side of the membrane; sequence ILYSLLGWSAF. A helical membrane pass occupies residues 482-504; it reads AGTFALLAMIPLNFWCATFYGNY. Residues 505–558 lie on the Cytoplasmic side of the membrane; the sequence is QADQLILTDKRTSGISEALNSIRVIKLLAWENLFYQKIINVRDGEIRLLKKKAT. Residues 559–579 traverse the membrane as a helical segment; that stretch reads IFFLNHLIWFFGPTLVSAITF. Over 580–584 the chain is Extracellular; that stretch reads SVFIK. A helical transmembrane segment spans residues 585–605; the sequence is FQNQTLTPTIAFTALSLFAIL. The Cytoplasmic segment spans residues 606–953; it reads RTPMDQIAST…KFSAYKWLAD (348 aa). The ABC transporter domain occupies 651–892; the sequence is FGFEDASMEW…NEFLRESINN (242 aa). 686-693 contributes to the ATP binding site; sequence GPTGSGKS. The segment covering 892–901 has biased composition (polar residues); it reads NDSKNTTHNQ. The tract at residues 892–926 is disordered; sequence NDSKNTTHNQIDLKRSTTSKKTKNGDPEGGNSQDE. The helical transmembrane segment at 954 to 974 threads the bilayer; the sequence is YFGGLGVVFVFTSSSILIHGI. Positions 961-1218 constitute an ABC transmembrane type-1 2 domain; the sequence is VFVFTSSSIL…SSVMIIMKAS (258 aa). Over 975–1013 the chain is Extracellular; it reads TLSQGFWLRYWLDTGSSGSKSTWLYRIVEGHSNIYFLLT. Residues 1014-1034 form a helical membrane-spanning segment; sequence YIIIGLVSSFLTSGKVWIAII. Residues 1035-1082 lie on the Cytoplasmic side of the membrane; the sequence is SGTNVTKKIFAKLLSSILYAKLRFHNVTPTGRIMNRFSKDMDIIDQQL. Residues 1083-1105 traverse the membrane as a helical segment; it reads IPNFEGLSYSVVVCLWIILLIGY. The Extracellular segment spans residues 1106 to 1109; it reads VTPQ. A helical membrane pass occupies residues 1110 to 1132; the sequence is FLLFAIPLCALYYTVCTLYLRAS. Residues 1133–1197 are Cytoplasmic-facing; it reads RELKRIDNIN…NMATEWITYR (65 aa). Residues 1198-1218 form a helical membrane-spanning segment; sequence VDIIGTLVLFSSSVMIIMKAS.

This sequence belongs to the ABC transporter superfamily. ABCC family. Conjugate transporter (TC 3.A.1.208) subfamily.

It localises to the membrane. The protein is ABC transporter NFT1 (NFT1) of Saccharomyces cerevisiae (strain ATCC 204508 / S288c) (Baker's yeast).